Reading from the N-terminus, the 254-residue chain is Glucosamine-6-phosphate deaminase (254 aa).

Asp-67 (proton acceptor; for enolization step) is an active-site residue. Residue Asn-136 is the For ring-opening step of the active site. The active-site Proton acceptor; for ring-opening step is the His-138. Glu-143 functions as the For ring-opening step in the catalytic mechanism.

This sequence belongs to the glucosamine/galactosamine-6-phosphate isomerase family. NagB subfamily.

The catalysed reaction is alpha-D-glucosamine 6-phosphate + H2O = beta-D-fructose 6-phosphate + NH4(+). The protein operates within amino-sugar metabolism; N-acetylneuraminate degradation; D-fructose 6-phosphate from N-acetylneuraminate: step 5/5. In terms of biological role, catalyzes the reversible isomerization-deamination of glucosamine 6-phosphate (GlcN6P) to form fructose 6-phosphate (Fru6P) and ammonium ion. The polypeptide is Glucosamine-6-phosphate deaminase (Brevibacillus brevis (strain 47 / JCM 6285 / NBRC 100599)).